The chain runs to 123 residues: Large ribosomal subunit protein uL22c (123 aa).

Belongs to the universal ribosomal protein uL22 family. In terms of assembly, part of the 50S ribosomal subunit.

Its subcellular location is the plastid. The protein resides in the chloroplast. Functionally, this protein binds specifically to 23S rRNA. Its function is as follows. The globular domain of the protein is located near the polypeptide exit tunnel on the outside of the subunit, while an extended beta-hairpin is found that lines the wall of the exit tunnel in the center of the 70S ribosome. The polypeptide is Large ribosomal subunit protein uL22c (rpl22) (Illicium oligandrum (Star anise)).